The primary structure comprises 314 residues: DNA-directed RNA polymerase subunit alpha (314 aa).

The interval 1–228 (MAQFHYECVE…SLFEPLKDIT (228 aa)) is alpha N-terminal domain (alpha-NTD). The alpha C-terminal domain (alpha-CTD) stretch occupies residues 240–314 (DPTSQIPIEE…LPQEKVAKAT (75 aa)).

Belongs to the RNA polymerase alpha chain family. In terms of assembly, in cyanobacteria the RNAP catalytic core is composed of 2 alpha, 1 beta, 1 beta', 1 gamma and 1 omega subunit. When a sigma factor is associated with the core the holoenzyme is formed, which can initiate transcription.

The catalysed reaction is RNA(n) + a ribonucleoside 5'-triphosphate = RNA(n+1) + diphosphate. DNA-dependent RNA polymerase catalyzes the transcription of DNA into RNA using the four ribonucleoside triphosphates as substrates. This chain is DNA-directed RNA polymerase subunit alpha, found in Trichodesmium erythraeum (strain IMS101).